We begin with the raw amino-acid sequence, 385 residues long: Elongation factor Ts, mitochondrial (385 aa).

Residues 1–50 (MAWSQSARKPMIGLLFRAQQHGARGYSYSAFQAHLSSSNVDQSATLLRRF) constitute a mitochondrion transit peptide.

The protein belongs to the EF-Ts family.

The protein resides in the mitochondrion. Functionally, associates with the EF-Tu.GDP complex and induces the exchange of GDP to GTP. It remains bound to the aminoacyl-tRNA.EF-Tu.GTP complex up to the GTP hydrolysis stage on the ribosome. The polypeptide is Elongation factor Ts, mitochondrial (Oryza sativa subsp. indica (Rice)).